A 100-amino-acid chain; its full sequence is NADH-quinone oxidoreductase subunit K 1 (100 aa).

3 helical membrane passes run 4-24 (LNNYLIISAILFSIGTIGVLV), 29-49 (IVIFMCVEMMLNAVNLTFIAF), and 60-80 (IFVFFVMTVAAAEAAVGLALM).

The protein belongs to the complex I subunit 4L family. NDH-1 is composed of 14 different subunits. Subunits NuoA, H, J, K, L, M, N constitute the membrane sector of the complex.

It is found in the cell inner membrane. It carries out the reaction a quinone + NADH + 5 H(+)(in) = a quinol + NAD(+) + 4 H(+)(out). In terms of biological role, NDH-1 shuttles electrons from NADH, via FMN and iron-sulfur (Fe-S) centers, to quinones in the respiratory chain. The immediate electron acceptor for the enzyme in this species is believed to be ubiquinone. Couples the redox reaction to proton translocation (for every two electrons transferred, four hydrogen ions are translocated across the cytoplasmic membrane), and thus conserves the redox energy in a proton gradient. The chain is NADH-quinone oxidoreductase subunit K 1 from Geotalea daltonii (strain DSM 22248 / JCM 15807 / FRC-32) (Geobacter daltonii).